Here is a 371-residue protein sequence, read N- to C-terminus: Carbamoyl phosphate synthase small chain (371 aa).

Positions 1 to 186 are CPSase; that stretch reads MDYYNNDTPG…IHQGKTGDVV (186 aa). 3 residues coordinate L-glutamine: S52, G233, and G235. In terms of domain architecture, Glutamine amidotransferase type-1 spans 185 to 371; sequence VVVVVDCGIK…KFKKMVVGDA (187 aa). C261 functions as the Nucleophile in the catalytic mechanism. Positions 262, 265, 303, 305, and 306 each coordinate L-glutamine. Residues H346 and E348 contribute to the active site.

This sequence belongs to the CarA family. As to quaternary structure, composed of two chains; the small (or glutamine) chain promotes the hydrolysis of glutamine to ammonia, which is used by the large (or ammonia) chain to synthesize carbamoyl phosphate. Tetramer of heterodimers (alpha,beta)4.

It carries out the reaction hydrogencarbonate + L-glutamine + 2 ATP + H2O = carbamoyl phosphate + L-glutamate + 2 ADP + phosphate + 2 H(+). It catalyses the reaction L-glutamine + H2O = L-glutamate + NH4(+). It participates in amino-acid biosynthesis; L-arginine biosynthesis; carbamoyl phosphate from bicarbonate: step 1/1. Its pathway is pyrimidine metabolism; UMP biosynthesis via de novo pathway; (S)-dihydroorotate from bicarbonate: step 1/3. Its function is as follows. Small subunit of the glutamine-dependent carbamoyl phosphate synthetase (CPSase). CPSase catalyzes the formation of carbamoyl phosphate from the ammonia moiety of glutamine, carbonate, and phosphate donated by ATP, constituting the first step of 2 biosynthetic pathways, one leading to arginine and/or urea and the other to pyrimidine nucleotides. The small subunit (glutamine amidotransferase) binds and cleaves glutamine to supply the large subunit with the substrate ammonia. The protein is Carbamoyl phosphate synthase small chain of Sulfolobus acidocaldarius (strain ATCC 33909 / DSM 639 / JCM 8929 / NBRC 15157 / NCIMB 11770).